A 195-amino-acid chain; its full sequence is Large ribosomal subunit protein bL17 (195 aa).

A disordered region spans residues 132-195 (ARGTRFAARK…TEAKDTKPES (64 aa)). Over residues 159–186 (PTAAAVAAEAQAEQPTAEAVAADDAATT) the composition is skewed to low complexity.

It belongs to the bacterial ribosomal protein bL17 family. In terms of assembly, part of the 50S ribosomal subunit. Contacts protein L32.

The protein is Large ribosomal subunit protein bL17 of Parafrankia sp. (strain EAN1pec).